The primary structure comprises 879 residues: Protein translocase subunit SecA (879 aa).

ATP contacts are provided by residues glutamine 87, 105-109 (GEGKT), and aspartate 509. Positions 834–879 (IAEDSEKLKPITGTKKPKRNDPCPCGSGKKYKNCCGQSGPKKGLLA) are disordered. Cysteine 856, cysteine 858, cysteine 867, and cysteine 868 together coordinate Zn(2+).

This sequence belongs to the SecA family. Monomer and homodimer. Part of the essential Sec protein translocation apparatus which comprises SecA, SecYEG and auxiliary proteins SecDF-YajC and YidC. Requires Zn(2+) as cofactor.

The protein resides in the cell inner membrane. Its subcellular location is the cytoplasm. The enzyme catalyses ATP + H2O + cellular proteinSide 1 = ADP + phosphate + cellular proteinSide 2.. Part of the Sec protein translocase complex. Interacts with the SecYEG preprotein conducting channel. Has a central role in coupling the hydrolysis of ATP to the transfer of proteins into and across the cell membrane, serving as an ATP-driven molecular motor driving the stepwise translocation of polypeptide chains across the membrane. The protein is Protein translocase subunit SecA of Sulfurovum sp. (strain NBC37-1).